The primary structure comprises 76 residues: DNA-directed RNA polymerase subunit epsilon (76 aa).

Belongs to the RNA polymerase subunit epsilon family. RNAP is composed of a core of 2 alpha, a beta and a beta' subunit. The core is associated with a delta subunit, and at least one of epsilon or omega. When a sigma factor is associated with the core the holoenzyme is formed, which can initiate transcription.

The catalysed reaction is RNA(n) + a ribonucleoside 5'-triphosphate = RNA(n+1) + diphosphate. Its function is as follows. A non-essential component of RNA polymerase (RNAP). This Streptococcus gordonii (strain Challis / ATCC 35105 / BCRC 15272 / CH1 / DL1 / V288) protein is DNA-directed RNA polymerase subunit epsilon.